The primary structure comprises 860 residues: Envelope glycoprotein (860 aa).

Positions 1 to 6 are excised as a propeptide; sequence MVSIAF. Residues 7-614 are Extracellular-facing; the sequence is YGGIPGGIST…GKDLWSHIGN (608 aa). N-linked (GlcNAc...) asparagine; by host glycans are attached at residues asparagine 40, asparagine 112, asparagine 141, asparagine 148, asparagine 186, asparagine 201, asparagine 214, asparagine 235, asparagine 244, asparagine 308, asparagine 337, asparagine 340, asparagine 346, asparagine 369, asparagine 400, asparagine 407, asparagine 412, and asparagine 423. The interval 447-467 is fusion peptide; that stretch reads FGISAIVAAIVAATAIAASAT. 2 N-linked (GlcNAc...) asparagine; by host glycosylation sites follow: asparagine 484 and asparagine 491. The segment at 499–514 is immunosuppression; the sequence is LIEQQIKILYAMILQT. N-linked (GlcNAc...) asparagine; by host glycans are attached at residues asparagine 551 and asparagine 558. 2 coiled-coil regions span residues 577 to 625 and 664 to 700; these read ILTT…SIIK and KKFY…YCKQ. A helical membrane pass occupies residues 615–635; the sequence is WIPGLGASIIKYIVMFLLIYL. The Cytoplasmic segment spans residues 636–860; it reads LLTSSPKILR…TSHVSMPQYV (225 aa). The disordered stretch occupies residues 746–765; it reads AAINEHKNGSGGNNPHQGSL.

The mature envelope protein (Env) consists of a trimer of SU-TM heterodimers attached by noncovalent interactions or by a labile interchain disulfide bond. Specific enzymatic cleavages in vivo yield mature proteins. Envelope glycoproteins are synthesized as an inactive precursor that is N-glycosylated and processed likely by host cell furin or by a furin-like protease in the Golgi to yield the mature SU and TM proteins. The cleavage site between SU and TM requires the minimal sequence [KR]-X-[KR]-R.

The protein localises to the virion membrane. It localises to the host cell membrane. The surface protein (SU) attaches the virus to the host cell by binding to its receptor. This interaction triggers the refolding of the transmembrane protein (TM) and is thought to activate its fusogenic potential by unmasking its fusion peptide. Fusion occurs at the host cell plasma membrane. Its function is as follows. The transmembrane protein (TM) acts as a class I viral fusion protein. Under the current model, the protein has at least 3 conformational states: pre-fusion native state, pre-hairpin intermediate state, and post-fusion hairpin state. During viral and target cell membrane fusion, the coiled coil regions (heptad repeats) assume a trimer-of-hairpins structure, positioning the fusion peptide in close proximity to the C-terminal region of the ectodomain. The formation of this structure appears to drive apposition and subsequent fusion of viral and target cell membranes. Membranes fusion leads to delivery of the nucleocapsid into the cytoplasm. The chain is Envelope glycoprotein (env) from Equine infectious anemia virus (isolate P3.2-5) (EIAV).